Consider the following 131-residue polypeptide: Large ribosomal subunit protein bL19 (131 aa).

The interval Gly107 to Glu131 is disordered. Residues Arg111 to Lys124 show a composition bias toward basic and acidic residues.

This sequence belongs to the bacterial ribosomal protein bL19 family.

Functionally, this protein is located at the 30S-50S ribosomal subunit interface and may play a role in the structure and function of the aminoacyl-tRNA binding site. In Methylobacterium sp. (strain 4-46), this protein is Large ribosomal subunit protein bL19.